Consider the following 125-residue polypeptide: Ribosome-binding factor A (125 aa).

This sequence belongs to the RbfA family. In terms of assembly, monomer. Binds 30S ribosomal subunits, but not 50S ribosomal subunits or 70S ribosomes.

It localises to the cytoplasm. Functionally, one of several proteins that assist in the late maturation steps of the functional core of the 30S ribosomal subunit. Associates with free 30S ribosomal subunits (but not with 30S subunits that are part of 70S ribosomes or polysomes). Required for efficient processing of 16S rRNA. May interact with the 5'-terminal helix region of 16S rRNA. This chain is Ribosome-binding factor A, found in Thermosipho melanesiensis (strain DSM 12029 / CIP 104789 / BI429).